Consider the following 372-residue polypeptide: Maltose/maltodextrin import ATP-binding protein MalK (372 aa).

The region spanning Val4–Ile234 is the ABC transporter domain. Residue Gly36–Ser43 coordinates ATP.

This sequence belongs to the ABC transporter superfamily. Maltooligosaccharide importer (TC 3.A.1.1.1) family. In terms of assembly, the complex is composed of two ATP-binding proteins (MalK), two transmembrane proteins (MalG and MalK) and a solute-binding protein (MalE).

It localises to the cell inner membrane. The catalysed reaction is D-maltose(out) + ATP + H2O = D-maltose(in) + ADP + phosphate + H(+). Its function is as follows. Part of the ABC transporter complex MalEFGK involved in maltose/maltodextrin import. Responsible for energy coupling to the transport system. The sequence is that of Maltose/maltodextrin import ATP-binding protein MalK from Mannheimia succiniciproducens (strain KCTC 0769BP / MBEL55E).